Reading from the N-terminus, the 865-residue chain is Protein translocase subunit SecA (865 aa).

ATP is bound by residues Q93, 111–115 (GEGKT), and D501. Residues C841, C843, C852, and C853 each contribute to the Zn(2+) site.

The protein belongs to the SecA family. Monomer and homodimer. Part of the essential Sec protein translocation apparatus which comprises SecA, SecYEG and auxiliary proteins SecDF-YajC and YidC. Requires Zn(2+) as cofactor.

The protein localises to the cell inner membrane. Its subcellular location is the cytoplasm. It catalyses the reaction ATP + H2O + cellular proteinSide 1 = ADP + phosphate + cellular proteinSide 2.. Part of the Sec protein translocase complex. Interacts with the SecYEG preprotein conducting channel. Has a central role in coupling the hydrolysis of ATP to the transfer of proteins into and across the cell membrane, serving as an ATP-driven molecular motor driving the stepwise translocation of polypeptide chains across the membrane. The protein is Protein translocase subunit SecA of Helicobacter pylori (strain ATCC 700392 / 26695) (Campylobacter pylori).